The sequence spans 483 residues: Pre-glycoprotein polyprotein GP complex (483 aa).

Glycine 2 carries N-myristoyl glycine; by host lipidation. Residues 2–17 (GQFISFMQEIPIFLQE) lie on the Extracellular side of the membrane. Residues 18–32 (ALNIALVAVSLICIV) form a helical membrane-spanning segment. Position 33 (lysine 33) is a topological domain, cytoplasmic. A helical transmembrane segment spans residues 34–53 (GLVNLYRCGLFQLMVFLVLA). Extracellular segments lie at residues 54–58 (GRSCS) and 59–422 (EETF…TLVD). A Zn(2+)-binding site is contributed by cysteine 57. N-linked (GlcNAc...) asparagine; by host glycans are attached at residues asparagine 83 and asparagine 95. Cystine bridges form between cysteine 92–cysteine 224, cysteine 134–cysteine 162, cysteine 205–cysteine 211, cysteine 269–cysteine 282, cysteine 291–cysteine 300, and cysteine 354–cysteine 375. Residues asparagine 164 and asparagine 176 are each glycosylated (N-linked (GlcNAc...) asparagine; by host). Residues asparagine 355, asparagine 363, asparagine 380, and asparagine 385 are each glycosylated (N-linked (GlcNAc...) asparagine; by host). A helical membrane pass occupies residues 423–443 (ICFWSTVFFTSTLFLHLIGFP). Over 444–483 (THEHIRGEGCPLPHRLNSMGGCRCGKYLPLKKPTIWHRRH) the chain is Cytoplasmic. Zn(2+) is bound by residues histidine 445, histidine 447, cysteine 453, histidine 457, cysteine 465, cysteine 467, and histidine 483.

The protein belongs to the arenaviridae GPC protein family. In terms of assembly, homotetramer; disulfide-linked. As to quaternary structure, homotetramer. GP2 homotetramers bind through ionic interactions with GP1 homotetramers to form the GP complex together with the stable signal peptide. The GP-C polyprotein interacts with the host protease MBTPS1/SKI-1 resulting in the polyprotein processing. In terms of processing, specific enzymatic cleavages in vivo yield mature proteins. GP-C polyprotein is cleaved in the endoplasmic reticulum by the host protease MBTPS1. Only cleaved glycoprotein is incorporated into virions. The SSP remains stably associated with the GP complex following cleavage by signal peptidase and plays crucial roles in the trafficking of GP through the secretory pathway. Post-translationally, myristoylation is necessary for GP2-mediated fusion activity.

It localises to the virion membrane. It is found in the host endoplasmic reticulum membrane. The protein resides in the host Golgi apparatus membrane. Its subcellular location is the host cell membrane. Its function is as follows. Class I viral fusion protein that directs fusion of viral and host endosomal membranes, leading to delivery of the nucleocapsid into the cytoplasm. Membrane fusion is mediated by irreversible conformational changes induced upon acidification in the endosome. Stable signal peptide (SSP): cleaved and functions as a signal peptide. In addition, it is also retained as the third component of the GP complex. The SSP is required for efficient glycoprotein expression, post-translational maturation cleavage of GP1 and GP2, glycoprotein transport to the cell surface plasma membrane, formation of infectious virus particles, and acid pH-dependent glycoprotein-mediated cell fusion. In terms of biological role, interacts with the host receptor. This Tacaribe virus (strain V5) (TCRV) protein is Pre-glycoprotein polyprotein GP complex.